The chain runs to 821 residues: Centrosomal protein of 95 kDa (821 aa).

3 disordered regions span residues 310–354 (TLCK…FPQK), 390–474 (ATGE…DTHH), and 514–550 (KEAFAKGTTKQSQVQKIYSRKTAAPTPKGGLLKSSKA). Basic and acidic residues-rich tracts occupy residues 325-340 (ESSKTRRLSKGERSEN) and 390-410 (ATGEAHGKDGGAGDEEAHSAN). Positions 427–441 (RKPRPGFSMHRKAPY) are enriched in basic residues. Phosphoserine occurs at positions 445, 447, and 449. 2 coiled-coil regions span residues 578-627 (LTKM…VKKE) and 695-789 (LQIQ…DDDA).

The protein localises to the cytoplasm. It is found in the cytoskeleton. It localises to the microtubule organizing center. The protein resides in the centrosome. Its subcellular location is the spindle pole. The polypeptide is Centrosomal protein of 95 kDa (Cep95) (Rattus norvegicus (Rat)).